We begin with the raw amino-acid sequence, 452 residues long: Bifunctional protein GlmU (452 aa).

The tract at residues 1-225 (MDVVILAAGL…ENELIGINTR (225 aa)) is pyrophosphorylase. Residues 6–9 (LAAG), K20, Q71, and 76–77 (GT) contribute to the UDP-N-acetyl-alpha-D-glucosamine site. Position 99 (D99) interacts with Mg(2+). G136, E151, N166, and N223 together coordinate UDP-N-acetyl-alpha-D-glucosamine. Position 223 (N223) interacts with Mg(2+). Positions 226-246 (AELSLAMRYLRDRIVKGWMEK) are linker. The N-acetyltransferase stretch occupies residues 247 to 452 (GITFYDPALV…LGWAKKKRKQ (206 aa)). 2 residues coordinate UDP-N-acetyl-alpha-D-glucosamine: R329 and K347. The active-site Proton acceptor is the H359. Residues Y362 and N373 each coordinate UDP-N-acetyl-alpha-D-glucosamine. Acetyl-CoA contacts are provided by residues A376, 382–383 (NY), S401, A419, and R436.

It in the N-terminal section; belongs to the N-acetylglucosamine-1-phosphate uridyltransferase family. The protein in the C-terminal section; belongs to the transferase hexapeptide repeat family. In terms of assembly, homotrimer. Mg(2+) is required as a cofactor.

The protein localises to the cytoplasm. It catalyses the reaction alpha-D-glucosamine 1-phosphate + acetyl-CoA = N-acetyl-alpha-D-glucosamine 1-phosphate + CoA + H(+). The enzyme catalyses N-acetyl-alpha-D-glucosamine 1-phosphate + UTP + H(+) = UDP-N-acetyl-alpha-D-glucosamine + diphosphate. Its pathway is nucleotide-sugar biosynthesis; UDP-N-acetyl-alpha-D-glucosamine biosynthesis; N-acetyl-alpha-D-glucosamine 1-phosphate from alpha-D-glucosamine 6-phosphate (route II): step 2/2. It participates in nucleotide-sugar biosynthesis; UDP-N-acetyl-alpha-D-glucosamine biosynthesis; UDP-N-acetyl-alpha-D-glucosamine from N-acetyl-alpha-D-glucosamine 1-phosphate: step 1/1. The protein operates within bacterial outer membrane biogenesis; LPS lipid A biosynthesis. Catalyzes the last two sequential reactions in the de novo biosynthetic pathway for UDP-N-acetylglucosamine (UDP-GlcNAc). The C-terminal domain catalyzes the transfer of acetyl group from acetyl coenzyme A to glucosamine-1-phosphate (GlcN-1-P) to produce N-acetylglucosamine-1-phosphate (GlcNAc-1-P), which is converted into UDP-GlcNAc by the transfer of uridine 5-monophosphate (from uridine 5-triphosphate), a reaction catalyzed by the N-terminal domain. This Thermodesulfovibrio yellowstonii (strain ATCC 51303 / DSM 11347 / YP87) protein is Bifunctional protein GlmU.